Here is a 199-residue protein sequence, read N- to C-terminus: Probable GTP-binding protein EngB (199 aa).

An EngB-type G domain is found at 28-199; sequence DLPEVALAGR…EAWDTILAEL (172 aa). Residues 36–43, 63–67, 81–84, 148–151, and 180–182 contribute to the GTP site; these read GRSNVGKS, GKTQL, DVPG, TKAD, and FSS. The Mg(2+) site is built by S43 and T65.

It belongs to the TRAFAC class TrmE-Era-EngA-EngB-Septin-like GTPase superfamily. EngB GTPase family. It depends on Mg(2+) as a cofactor.

In terms of biological role, necessary for normal cell division and for the maintenance of normal septation. The polypeptide is Probable GTP-binding protein EngB (Streptococcus thermophilus (strain CNRZ 1066)).